A 266-amino-acid polypeptide reads, in one-letter code: Imidazole glycerol phosphate synthase subunit HisF (266 aa).

Active-site residues include aspartate 11 and aspartate 130.

Belongs to the HisA/HisF family. Heterodimer of HisH and HisF.

The protein localises to the cytoplasm. It carries out the reaction 5-[(5-phospho-1-deoxy-D-ribulos-1-ylimino)methylamino]-1-(5-phospho-beta-D-ribosyl)imidazole-4-carboxamide + L-glutamine = D-erythro-1-(imidazol-4-yl)glycerol 3-phosphate + 5-amino-1-(5-phospho-beta-D-ribosyl)imidazole-4-carboxamide + L-glutamate + H(+). The protein operates within amino-acid biosynthesis; L-histidine biosynthesis; L-histidine from 5-phospho-alpha-D-ribose 1-diphosphate: step 5/9. Functionally, IGPS catalyzes the conversion of PRFAR and glutamine to IGP, AICAR and glutamate. The HisF subunit catalyzes the cyclization activity that produces IGP and AICAR from PRFAR using the ammonia provided by the HisH subunit. The protein is Imidazole glycerol phosphate synthase subunit HisF of Verminephrobacter eiseniae (strain EF01-2).